Here is a 134-residue protein sequence, read N- to C-terminus: Replication enhancer protein (134 aa).

The protein belongs to the geminiviridae replication enhancer protein family. In terms of assembly, homooligomer. Interacts with the replication-associated protein (REP). Interacts with host proliferating cell nuclear antigen (PCNA). Interacts with host retinoblastoma-related protein 1 (RBR1), and may thereby deregulate the host cell cycle. Oligomerization and interaction with PCNA are necessary for optimal replication enhancement.

Functionally, increases viral DNA accumulation. Enhances infectivity and symptom expression. This is Replication enhancer protein from Nicotiana tabacum (Common tobacco).